The sequence spans 482 residues: Adenylosuccinate lyase (482 aa).

Substrate-binding positions include 14-15, 82-84, and 108-109; these read RY, RHD, and TS. The active-site Proton donor/acceptor is the H156. K196 is covalently cross-linked (Glycyl lysine isopeptide (Lys-Gly) (interchain with G-Cter in ubiquitin)). Q238 serves as a coordination point for substrate. S286 functions as the Proton donor/acceptor in the catalytic mechanism. Substrate is bound by residues R300, R326, S331, and R335.

This sequence belongs to the lyase 1 family. Adenylosuccinate lyase subfamily. Homotetramer. Residues from neighboring subunits contribute catalytic and substrate-binding residues to each active site.

It carries out the reaction N(6)-(1,2-dicarboxyethyl)-AMP = fumarate + AMP. The catalysed reaction is (2S)-2-[5-amino-1-(5-phospho-beta-D-ribosyl)imidazole-4-carboxamido]succinate = 5-amino-1-(5-phospho-beta-D-ribosyl)imidazole-4-carboxamide + fumarate. The protein operates within purine metabolism; AMP biosynthesis via de novo pathway; AMP from IMP: step 2/2. It participates in purine metabolism; IMP biosynthesis via de novo pathway; 5-amino-1-(5-phospho-D-ribosyl)imidazole-4-carboxamide from 5-amino-1-(5-phospho-D-ribosyl)imidazole-4-carboxylate: step 2/2. This chain is Adenylosuccinate lyase (ADE13), found in Saccharomyces cerevisiae (strain ATCC 204508 / S288c) (Baker's yeast).